We begin with the raw amino-acid sequence, 102 residues long: NADH-quinone oxidoreductase subunit K (102 aa).

Helical transmembrane passes span 6 to 26 (LEHGLIVATILFALGFYGVMV), 30 to 50 (LLFMLMSLEIMMNAAALAFVL), and 62 to 82 (VMFILILTLAAAEACIGLAIV).

It belongs to the complex I subunit 4L family. As to quaternary structure, NDH-1 is composed of 14 different subunits. Subunits NuoA, H, J, K, L, M, N constitute the membrane sector of the complex.

The protein localises to the cell inner membrane. It carries out the reaction a quinone + NADH + 5 H(+)(in) = a quinol + NAD(+) + 4 H(+)(out). Functionally, NDH-1 shuttles electrons from NADH, via FMN and iron-sulfur (Fe-S) centers, to quinones in the respiratory chain. The immediate electron acceptor for the enzyme in this species is believed to be ubiquinone. Couples the redox reaction to proton translocation (for every two electrons transferred, four hydrogen ions are translocated across the cytoplasmic membrane), and thus conserves the redox energy in a proton gradient. The polypeptide is NADH-quinone oxidoreductase subunit K (Acinetobacter baumannii (strain AB307-0294)).